The chain runs to 62 residues: Large ribosomal subunit protein uL30 (62 aa).

The protein belongs to the universal ribosomal protein uL30 family. In terms of assembly, part of the 50S ribosomal subunit.

The sequence is that of Large ribosomal subunit protein uL30 from Staphylococcus carnosus (strain TM300).